A 314-amino-acid chain; its full sequence is MPEQLVLRATLEGHSGWVTSLSTAPENPDILLSGSRDKSIILWNLVRDDVNYGVAQRRLTGHSHFVSDCALSFDSHYALSASWDKTIRLWDLEKGECTHQFVGHTSDVLSVSISPDNRQVVSGSRDKTIKIWNIIGNCKYTITDGGHSDWVSCVRFSPNPDNLTFVSAGWDKAVKVWDLETFSLRTSHYGHTGYVSAVTISPDGSLCASGGRDGTLMLWDLNESTHLYSLEAKANINALVFSPNRYWLCAATGSSIRIFDLETQEKVDELTVDFVGVGKKSSEPECISLTWSPDGQTLFSGWTDNLIRVWQVTK.

Threonine 10 is modified (phosphothreonine). A WD 1 repeat occupies 13–44 (GHSGWVTSLSTAPENPDILLSGSRDKSIILWN). At serine 39 the chain carries Phosphoserine. At tyrosine 52 the chain carries Phosphotyrosine. WD repeat units follow at residues 61-91 (GHSH…RLWD), 103-133 (GHTS…KIWN), 146-178 (GHSD…KVWD), 190-220 (GHTG…MLWD), 231-260 (EAKA…RIFD), and 281-311 (SSEP…RVWQ). Residue serine 148 is modified to Phosphoserine. 2 positions are modified to phosphoserine: serine 242 and serine 255.

Belongs to the WD repeat G protein beta family. Ribosomal protein RACK1 subfamily. Component of the small ribosomal subunit (SSU). Mature yeast ribosomes consist of a small (40S) and a large (60S) subunit. The 40S small subunit contains 1 molecule of ribosomal RNA (18S rRNA) and at least 33 different proteins. The large 60S subunit contains 3 rRNA molecules (25S, 5.8S and 5S rRNA) and at least 46 different proteins. RACK1 is located at the head of the SSU in the vicinity of the mRNA exit channel. RACK1 interacts with the mRNA-binding protein SCP16. RACK1 also exists simultaneously as a homodimer in a cytosolic non-ribosome-bound form. Interacts with pck2. Interacts with pat1/ran1.

It is found in the cytoplasm. The protein resides in the membrane. Its function is as follows. Component of the ribosome, a large ribonucleoprotein complex responsible for the synthesis of proteins in the cell. The small ribosomal subunit (SSU) binds messenger RNAs (mRNAs) and translates the encoded message by selecting cognate aminoacyl-transfer RNA (tRNA) molecules. The large subunit (LSU) contains the ribosomal catalytic site termed the peptidyl transferase center (PTC), which catalyzes the formation of peptide bonds, thereby polymerizing the amino acids delivered by tRNAs into a polypeptide chain. The nascent polypeptides leave the ribosome through a tunnel in the LSU and interact with protein factors that function in enzymatic processing, targeting, and the membrane insertion of nascent chains at the exit of the ribosomal tunnel. Located at the head of the 40S ribosomal subunit in the vicinity of the mRNA exit channel, RACK1 serves as a scaffold protein that can recruit other proteins to the ribosome. Involved in induction of the ribosome quality control (RQC) pathway; a pathway that degrades nascent peptide chains during problematic translation. Involved in the negative regulation of translation of a specific subset of proteins. May be a receptor for protein kinase C in the regulation of actin cytoskeleton organization during cell wall synthesis and morphogenesis. Involved in the control of G2/M transition. May function as an anchoring protein for pat1/ran1 kinase. Negatively regulates the cell integrity transduction pathway by favoring translation of the tyrosine-phosphatases pyp1 and pyp2 that deactivate pmk1. Positively regulates the synthesis of the stress-responsive transcription factor Atf1 and the cytoplasmic catalase, a detoxificant enzyme induced by treatment with hydrogen peroxide. This is Small ribosomal subunit protein RACK1 from Schizosaccharomyces pombe (strain 972 / ATCC 24843) (Fission yeast).